Consider the following 355-residue polypeptide: Uroporphyrinogen decarboxylase (355 aa).

Substrate is bound by residues 27-31 (RQAGR), D78, Y155, S210, and H328.

The protein belongs to the uroporphyrinogen decarboxylase family. Homodimer.

The protein localises to the cytoplasm. The catalysed reaction is uroporphyrinogen III + 4 H(+) = coproporphyrinogen III + 4 CO2. It participates in porphyrin-containing compound metabolism; protoporphyrin-IX biosynthesis; coproporphyrinogen-III from 5-aminolevulinate: step 4/4. Its function is as follows. Catalyzes the decarboxylation of four acetate groups of uroporphyrinogen-III to yield coproporphyrinogen-III. The protein is Uroporphyrinogen decarboxylase of Pseudomonas fluorescens (strain ATCC BAA-477 / NRRL B-23932 / Pf-5).